Here is a 742-residue protein sequence, read N- to C-terminus: Alcohol dehydrogenase (quinone), dehydrogenase subunit (742 aa).

A signal peptide spans 1–35; sequence MTRPASAKRRSLLGILAAGTICAAALPYAAVPARA. Glutamate 96 is a binding site for pyrroloquinoline quinone. A disulfide bond links cysteine 142 and cysteine 143. Arginine 148 is a binding site for pyrroloquinoline quinone. Glutamate 216 provides a ligand contact to Ca(2+). Threonine 278 contacts pyrroloquinoline quinone. Ca(2+) is bound by residues asparagine 298 and aspartate 343. Catalysis depends on aspartate 343, which acts as the Proton acceptor. Pyrroloquinoline quinone-binding residues include lysine 370 and isoleucine 584. Positions 636–715 constitute a Cytochrome c domain; that stretch reads KVVDNGYFQY…AIRQYLIKRA (80 aa). Residues cysteine 649, cysteine 652, histidine 653, and methionine 692 each coordinate heme c. Positions 722-732 are enriched in basic and acidic residues; the sequence is EVDARKNDKNI. The segment at 722–742 is disordered; it reads EVDARKNDKNIPENPTLGINP.

This sequence belongs to the bacterial PQQ dehydrogenase family. In terms of assembly, the alcohol dehydrogenase multicomponent enzyme system is composed of a dehydrogenase subunit I (AdhA) and a cytochrome c subunit II (AdhB). Pyrroloquinoline quinone serves as cofactor. Requires Ca(2+) as cofactor. The cofactor is heme c.

The protein resides in the cell membrane. It catalyses the reaction ethanol + a ubiquinone = a ubiquinol + acetaldehyde. Dehydrogenase component of the alcohol dehydrogenase multicomponent enzyme system which is involved in the production of acetic acid and in the ethanol oxidase respiratory chain. Quinohemoprotein alcohol dehydrogenase (ADH) catalyzes the oxidation of ethanol to acetaldehyde by transferring electrons to the ubiquinone embedded in the membrane phospholipids. The electrons transfer from ethanol to membranous ubiquinone occurs from pyrroloquinoline quinone (PQQ) to one heme c in subunit I (AdhA), and finally to two heme c in subunit II (AdhB). Besides ubiquinone reduction, ADH also has a ubiquinol (QH2) oxidation reaction which mediates electron transfer from ubiquinol to the non-energy generating bypass oxidase system. The electrons transfer occurs from ubiquinol (QH2) to the additional heme c within subunit II (AdhB). The protein is Alcohol dehydrogenase (quinone), dehydrogenase subunit of Acetobacter aceti.